The sequence spans 227 residues: Orotidine 5'-phosphate decarboxylase (227 aa).

Residues Asp-8, Lys-30, 59-68 (DLKLYDIPNT), Thr-118, Arg-178, Gln-187, Gly-207, and Arg-208 each bind substrate. Catalysis depends on Lys-61, which acts as the Proton donor.

This sequence belongs to the OMP decarboxylase family. Type 1 subfamily. In terms of assembly, homodimer.

It carries out the reaction orotidine 5'-phosphate + H(+) = UMP + CO2. It participates in pyrimidine metabolism; UMP biosynthesis via de novo pathway; UMP from orotate: step 2/2. Functionally, catalyzes the decarboxylation of orotidine 5'-monophosphate (OMP) to uridine 5'-monophosphate (UMP). The chain is Orotidine 5'-phosphate decarboxylase from Nitratiruptor sp. (strain SB155-2).